The primary structure comprises 329 residues: Glucosyl-3-phosphoglycerate synthase (329 aa).

UDP-alpha-D-glucose contacts are provided by residues 55-59 (PALDE), Ser86, Lys119, and 139-141 (DSD). A Mn(2+)-binding site is contributed by Asp141. 189-192 (GRVT) is a (2R)-3-phosphoglycerate binding site. 234–237 (YGVE) is a UDP-alpha-D-glucose binding site. Position 263 (His263) interacts with Mn(2+). Residue Asn265 participates in (2R)-3-phosphoglycerate binding.

The protein belongs to the glycosyltransferase 2 family. In terms of assembly, homodimer. Mg(2+) is required as a cofactor. Requires Mn(2+) as cofactor.

The catalysed reaction is an NDP-alpha-D-glucose + (2R)-3-phosphoglycerate = (2R)-2-O-(alpha-D-glucopyranosyl)-3-phospho-glycerate + a ribonucleoside 5'-diphosphate + H(+). It carries out the reaction (2R)-3-phosphoglycerate + UDP-alpha-D-glucose = (2R)-2-O-(alpha-D-glucopyranosyl)-3-phospho-glycerate + UDP + H(+). It catalyses the reaction GDP-D-glucose + (2R)-3-phosphoglycerate = (2R)-2-O-(alpha-D-glucopyranosyl)-3-phospho-glycerate + GDP + H(+). Involved in the biosynthesis of 6-O-methylglucose lipopolysaccarides (MGLPs). Catalyzes the transfer of the glucose moiety from UDP-alpha-D-glucose (UDP-Glc) to the position 2 of 3-phospho-D-glycerate (3-PGA) to form glucosyl-3-phosphoglycerate (GPG). To a lesser extent can also use GDP-Glc but not UDP-Gal or UDP-GlcNAc as the sugar donor. In Mycolicibacterium paratuberculosis (strain ATCC BAA-968 / K-10) (Mycobacterium paratuberculosis), this protein is Glucosyl-3-phosphoglycerate synthase.